The primary structure comprises 1472 residues: ABC multidrug transporter atrI (1472 aa).

The segment at 1-28 (MRRSNVVPVHSLTSSTNTGRDSRGEKYD) is disordered. Positions 134–384 (FRRETWNFRN…FERQGWFCPP (251 aa)) constitute an ABC transporter 1 domain. N-linked (GlcNAc...) asparagine glycans are attached at residues Asn-143, Asn-277, Asn-308, and Asn-332. The next 7 helical transmembrane spans lie at 506–526 (ILAL…AGFY), 530–550 (ATLF…INSL), 580–600 (IPVK…LSGL), 605–625 (SQFF…SAVF), 639–659 (MTLA…VVPV), 664–684 (PWFK…ILIA), and 744–764 (FGIL…ATEL). A compositionally biased stretch (basic and acidic residues) spans 784-793 (AHLKNGHEPG). The tract at residues 784 to 821 (AHLKNGHEPGADEEAGAGKTVVSSSAEENKQDQGITSI) is disordered. The segment covering 804–821 (VVSSSAEENKQDQGITSI) has biased composition (polar residues). Residues 828–1070 (FTWRDVVYDI…TLLKYFESHG (243 aa)) enclose the ABC transporter 2 domain. 864 to 871 (GVSGAGKT) contacts ATP. Transmembrane regions (helical) follow at residues 1168–1188 (YIAA…FSFF), 1204–1224 (VFML…LFIT), 1244–1264 (FMIA…ILVF), 1282–1302 (LVLL…DFVI), 1309–1329 (ETAG…NGVM), and 1337–1357 (GFWI…GMAA). Asn-1402 is a glycosylation site (N-linked (GlcNAc...) asparagine). The chain crosses the membrane as a helical span at residues 1433-1453 (FGIFWAYVVFDIAVAVMLYYC). An N-linked (GlcNAc...) asparagine glycan is attached at Asn-1460.

It belongs to the ABC transporter superfamily. ABCG family. PDR (TC 3.A.1.205) subfamily.

It is found in the cell membrane. It carries out the reaction itraconazole(in) + ATP + H2O = itraconazole(out) + ADP + phosphate + H(+). The enzyme catalyses voriconazole(in) + ATP + H2O = voriconazole(out) + ADP + phosphate + H(+). The catalysed reaction is fluconazole(in) + ATP + H2O = fluconazole(out) + ADP + phosphate + H(+). Functionally, pleiotropic ABC efflux transporter involved in the basal level of azole susceptibility. Confers resistance to fluconazole, itraconazole and voriconazole. The protein is ABC multidrug transporter atrI of Aspergillus fumigatus (strain ATCC MYA-4609 / CBS 101355 / FGSC A1100 / Af293) (Neosartorya fumigata).